The following is a 525-amino-acid chain: GMP synthase [glutamine-hydrolyzing] (525 aa).

Residues 9–207 (RILILDFGSQ…VLDICACEAL (199 aa)) form the Glutamine amidotransferase type-1 domain. Catalysis depends on Cys-86, which acts as the Nucleophile. Catalysis depends on residues His-181 and Glu-183. Positions 208–400 (WTPATIIEDA…LGLPYDMLYR (193 aa)) constitute a GMPS ATP-PPase domain. An ATP-binding site is contributed by 235-241 (SGGVDSS).

Homodimer.

It catalyses the reaction XMP + L-glutamine + ATP + H2O = GMP + L-glutamate + AMP + diphosphate + 2 H(+). The protein operates within purine metabolism; GMP biosynthesis; GMP from XMP (L-Gln route): step 1/1. In terms of biological role, catalyzes the synthesis of GMP from XMP. The sequence is that of GMP synthase [glutamine-hydrolyzing] from Yersinia enterocolitica serotype O:8 / biotype 1B (strain NCTC 13174 / 8081).